The sequence spans 430 residues: Adenylosuccinate synthetase (430 aa).

GTP-binding positions include 12 to 18 and 40 to 42; these read GDEGKGK and GHT. The active-site Proton acceptor is the Asp13. Mg(2+) is bound by residues Asp13 and Gly40. IMP contacts are provided by residues 13–16, 38–41, Thr128, Arg142, Gln223, Thr238, and Arg302; these read DEGK and NAGH. The Proton donor role is filled by His41. 298–304 is a binding site for substrate; it reads TTTGRPR. GTP-binding positions include Arg304, 330–332, and 412–414; these read LLD and SVG.

The protein belongs to the adenylosuccinate synthetase family. Homodimer. Mg(2+) serves as cofactor.

Its subcellular location is the cytoplasm. It carries out the reaction IMP + L-aspartate + GTP = N(6)-(1,2-dicarboxyethyl)-AMP + GDP + phosphate + 2 H(+). It functions in the pathway purine metabolism; AMP biosynthesis via de novo pathway; AMP from IMP: step 1/2. In terms of biological role, plays an important role in the de novo pathway of purine nucleotide biosynthesis. Catalyzes the first committed step in the biosynthesis of AMP from IMP. The polypeptide is Adenylosuccinate synthetase (Listeria monocytogenes serovar 1/2a (strain ATCC BAA-679 / EGD-e)).